A 277-amino-acid polypeptide reads, in one-letter code: Putative protease slr0021 (277 aa).

Catalysis depends on serine 85, which acts as the Nucleophile. Catalysis depends on lysine 137, which acts as the Proton donor/acceptor.

This sequence belongs to the peptidase S49 family.

This Synechocystis sp. (strain ATCC 27184 / PCC 6803 / Kazusa) protein is Putative protease slr0021.